We begin with the raw amino-acid sequence, 387 residues long: Succinate--CoA ligase [ADP-forming] subunit beta (387 aa).

An ATP-grasp domain is found at 9–245; it reads KDLLESYGLK…KSQENAKELK (237 aa). ATP is bound by residues Lys-46, 53–55, Glu-100, Tyr-103, and Glu-108; that span reads GRG. Residues Asn-200 and Asp-214 each contribute to the Mg(2+) site. Residues Asn-265 and 322 to 324 each bind substrate; that span reads GIV.

This sequence belongs to the succinate/malate CoA ligase beta subunit family. Heterotetramer of two alpha and two beta subunits. Mg(2+) is required as a cofactor.

The catalysed reaction is succinate + ATP + CoA = succinyl-CoA + ADP + phosphate. It carries out the reaction GTP + succinate + CoA = succinyl-CoA + GDP + phosphate. It participates in carbohydrate metabolism; tricarboxylic acid cycle; succinate from succinyl-CoA (ligase route): step 1/1. Functionally, succinyl-CoA synthetase functions in the citric acid cycle (TCA), coupling the hydrolysis of succinyl-CoA to the synthesis of either ATP or GTP and thus represents the only step of substrate-level phosphorylation in the TCA. The beta subunit provides nucleotide specificity of the enzyme and binds the substrate succinate, while the binding sites for coenzyme A and phosphate are found in the alpha subunit. The protein is Succinate--CoA ligase [ADP-forming] subunit beta of Francisella tularensis subsp. tularensis (strain WY96-3418).